The chain runs to 147 residues: Large ribosomal subunit protein uL22c (147 aa).

It belongs to the universal ribosomal protein uL22 family. Part of the 50S ribosomal subunit.

Its subcellular location is the plastid. This protein binds specifically to 23S rRNA. In terms of biological role, the globular domain of the protein is located near the polypeptide exit tunnel on the outside of the subunit, while an extended beta-hairpin is found that lines the wall of the exit tunnel in the center of the 70S ribosome. The sequence is that of Large ribosomal subunit protein uL22c (rpl22) from Cuscuta obtusiflora (Peruvian dodder).